A 415-amino-acid chain; its full sequence is Gamma-glutamyl phosphate reductase (415 aa).

It belongs to the gamma-glutamyl phosphate reductase family.

The protein localises to the cytoplasm. It catalyses the reaction L-glutamate 5-semialdehyde + phosphate + NADP(+) = L-glutamyl 5-phosphate + NADPH + H(+). The protein operates within amino-acid biosynthesis; L-proline biosynthesis; L-glutamate 5-semialdehyde from L-glutamate: step 2/2. In terms of biological role, catalyzes the NADPH-dependent reduction of L-glutamate 5-phosphate into L-glutamate 5-semialdehyde and phosphate. The product spontaneously undergoes cyclization to form 1-pyrroline-5-carboxylate. In Listeria monocytogenes serotype 4a (strain HCC23), this protein is Gamma-glutamyl phosphate reductase.